A 469-amino-acid chain; its full sequence is Glutamine synthetase (469 aa).

The region spanning 14 to 98 (NDVKYVDLRF…ITCDVLEPTT (85 aa)) is the GS beta-grasp domain. The GS catalytic domain occupies 106–469 (PRGIAKKAEA…PVEFDMYYSG (364 aa)). Mg(2+) is bound by residues glutamate 131 and glutamate 133. Glutamate 209 provides a ligand contact to ATP. The Mg(2+) site is built by glutamate 214 and glutamate 221. L-glutamate is bound by residues 265–266 (NG) and glycine 266. Residue histidine 270 participates in Mg(2+) binding. ATP is bound by residues 272–274 (HQS) and serine 274. L-glutamate is bound by residues arginine 322, glutamate 328, and arginine 340. ATP is bound by residues arginine 340, arginine 345, and lysine 353. Glutamate 358 contacts Mg(2+). Arginine 360 is an L-glutamate binding site. Position 398 is an O-AMP-tyrosine (tyrosine 398).

This sequence belongs to the glutamine synthetase family. In terms of assembly, oligomer of 12 subunits arranged in the form of two hexameric ring. The cofactor is Mg(2+).

Its subcellular location is the cytoplasm. It catalyses the reaction L-glutamate + NH4(+) + ATP = L-glutamine + ADP + phosphate + H(+). The activity of this enzyme could be controlled by adenylation under conditions of abundant glutamine. In terms of biological role, catalyzes the ATP-dependent biosynthesis of glutamine from glutamate and ammonia. The sequence is that of Glutamine synthetase from Bradyrhizobium diazoefficiens (strain JCM 10833 / BCRC 13528 / IAM 13628 / NBRC 14792 / USDA 110).